The following is a 152-amino-acid chain: MATEEDVKQRQIIESRARNISHNVRCTECGSQSIEDSQADIAILLRKLIRDEIKSGKSDKEIYKKLQADYGETILYTPKFDLQTAAIWLSPVIVGGVAAGVWAYQKHRQRTNVHIMALNLVRGVPLTPREKETMLDVLTPPPPANKWWWPGK.

The Mitochondrial intermembrane segment spans residues 1-83; the sequence is MATEEDVKQR…ILYTPKFDLQ (83 aa). Heme-binding residues include C26 and C29. The helical transmembrane segment at 84–104 threads the bilayer; that stretch reads TAAIWLSPVIVGGVAAGVWAY. The Mitochondrial matrix segment spans residues 105–152; the sequence is QKHRQRTNVHIMALNLVRGVPLTPREKETMLDVLTPPPPANKWWWPGK.

The protein belongs to the CcmH/CycL/Ccl2/NrfF family.

The protein localises to the mitochondrion inner membrane. Its function is as follows. Plays a role in mitochondrial cytochrome c maturation. Probable component of a heme lyase complex involved in the reduction of apocytochrome c. This Oryza sativa subsp. japonica (Rice) protein is Cytochrome c-type biogenesis CcmH-like mitochondrial protein.